A 584-amino-acid chain; its full sequence is ATP-dependent ubiquitin transferase-like protein Cap2 (584 aa).

The tract at residues 1–137 is E2-like domain; the sequence is MKQELHHTLL…SGTSNDVELE (137 aa). The For E2-like domain role is filled by C90. The tract at residues 138–338 is linker domain; it reads GEFSAYWQSE…LLSRNQSRPD (201 aa). Residues 339-584 form an adenylation plus E1-like domain region; sequence VGNLSQKRIA…RFSGCNICDE (246 aa). The active-site For E1-like domain is the C522.

The protein in the C-terminal section; belongs to the HesA/MoeB/ThiF family. Interacts with CD-NTase DncV in the presence and absence of phage T2. A Cap2 dimer is bound on either side by a DncV monomer.

Its function is as follows. CD-NTase priming component of a CBASS antiviral system. CBASS (cyclic oligonucleotide-based antiphage signaling system) provides immunity against bacteriophages. The CD-NTase protein (DncV) synthesizes cyclic nucleotides in response to infection; these serve as specific second messenger signals. The signals activate a diverse range of effectors, leading to bacterial cell death and thus abortive phage infection. A type II-A(GA) CBASS system. In terms of biological role, primes DncV; acts as a protein transferase, conjugating DncV, the CD-NTase, to unidentified target(s) in the cell via an E1-E2 ubiquitin transferase-like mechanism. During the conjugation reaction DncV is probably transiently attached to AMP. Protein conjugation requires ATP. Functionally, protects E.coli against phage infection. When the CBASS operon (capV-dncV-cap2-cap3) is introduced in E.coli MG1655 there is about 100-fold protection against phages P1 and T2. When the operon is introduced in E.coli MG1655 there is a more than 10(3) decrease in the efficiency of T2 plaque formation. Protects 100-fold against phage T5, offers no protection against T7. When the operon is introduced in E.coli MG1655 it protects against phages T2, T4, T5 and T6. Another paper shows the operon confers protection against phages P1, T2, T5 and T6 but not T4 or lambda. The chain is ATP-dependent ubiquitin transferase-like protein Cap2 from Vibrio cholerae serotype O1 (strain ATCC 39315 / El Tor Inaba N16961).